The sequence spans 369 residues: Protein disulfide-isomerase erp38 (369 aa).

The signal sequence occupies residues 1–18 (MVLLKSLVVASLAAAVAA). 2 Thioredoxin domains span residues 19–130 (KSAV…EKTG) and 131–251 (VKAR…EKAG). Active-site nucleophile residues include Cys50, Cys53, Cys170, and Cys173. Intrachain disulfides connect Cys50–Cys53 and Cys170–Cys173. The Prevents secretion from ER signature appears at 366-369 (KEEL).

It belongs to the protein disulfide isomerase family.

It is found in the endoplasmic reticulum lumen. It catalyses the reaction Catalyzes the rearrangement of -S-S- bonds in proteins.. The chain is Protein disulfide-isomerase erp38 (erp38) from Neurospora crassa (strain ATCC 24698 / 74-OR23-1A / CBS 708.71 / DSM 1257 / FGSC 987).